Reading from the N-terminus, the 206-residue chain is Large ribosomal subunit protein uL4 (206 aa).

Belongs to the universal ribosomal protein uL4 family. In terms of assembly, part of the 50S ribosomal subunit.

One of the primary rRNA binding proteins, this protein initially binds near the 5'-end of the 23S rRNA. It is important during the early stages of 50S assembly. It makes multiple contacts with different domains of the 23S rRNA in the assembled 50S subunit and ribosome. Its function is as follows. Forms part of the polypeptide exit tunnel. The sequence is that of Large ribosomal subunit protein uL4 from Methylorubrum populi (strain ATCC BAA-705 / NCIMB 13946 / BJ001) (Methylobacterium populi).